The primary structure comprises 270 residues: 4-hydroxy-tetrahydrodipicolinate reductase (270 aa).

Residue 7 to 12 coordinates NAD(+); it reads GANGRM. Arg34 provides a ligand contact to NADP(+). Residues 97 to 99 and 121 to 124 each bind NAD(+); these read GTT and SGNM. His155 functions as the Proton donor/acceptor in the catalytic mechanism. His156 lines the (S)-2,3,4,5-tetrahydrodipicolinate pocket. Lys159 serves as the catalytic Proton donor. Residue 165–166 participates in (S)-2,3,4,5-tetrahydrodipicolinate binding; it reads GT.

The protein belongs to the DapB family.

The protein resides in the cytoplasm. It catalyses the reaction (S)-2,3,4,5-tetrahydrodipicolinate + NAD(+) + H2O = (2S,4S)-4-hydroxy-2,3,4,5-tetrahydrodipicolinate + NADH + H(+). The enzyme catalyses (S)-2,3,4,5-tetrahydrodipicolinate + NADP(+) + H2O = (2S,4S)-4-hydroxy-2,3,4,5-tetrahydrodipicolinate + NADPH + H(+). It functions in the pathway amino-acid biosynthesis; L-lysine biosynthesis via DAP pathway; (S)-tetrahydrodipicolinate from L-aspartate: step 4/4. In terms of biological role, catalyzes the conversion of 4-hydroxy-tetrahydrodipicolinate (HTPA) to tetrahydrodipicolinate. In Bartonella tribocorum (strain CIP 105476 / IBS 506), this protein is 4-hydroxy-tetrahydrodipicolinate reductase.